Here is a 178-residue protein sequence, read N- to C-terminus: METQGVMKEIQYEEFEEKIIEIRRTSKVTKGGKNLSFRVVAIVGNKNGKVGLGIGKAREVPEAIRKAISAAKRNIIEVPVINGTIPHEIIGRQDASKVLLRPAAPGTGIIAGGTVRAVVELAGIQNILTKSLGSTNPLNLALATMNGLKNLLDPRKVAKLRDISVEEVFKGVRREDNA.

The region spanning 15–78 (FEEKIIEIRR…SAAKRNIIEV (64 aa)) is the S5 DRBM domain.

The protein belongs to the universal ribosomal protein uS5 family. As to quaternary structure, part of the 30S ribosomal subunit. Contacts proteins S4 and S8.

Functionally, with S4 and S12 plays an important role in translational accuracy. In terms of biological role, located at the back of the 30S subunit body where it stabilizes the conformation of the head with respect to the body. The sequence is that of Small ribosomal subunit protein uS5 from Thermotoga sp. (strain RQ2).